Consider the following 236-residue polypeptide: uncharacterized protein (236 aa).

The region spanning 4 to 236 (QFLIAYRGYS…VKFQITAQIY (233 aa)) is the GP-PDE domain.

This sequence to glycerophosphoryl diester phosphodiesterases (EC 3.1.4.46). The protein to M.genitalium MG293.

This is an uncharacterized protein from Mycoplasma genitalium (strain ATCC 33530 / DSM 19775 / NCTC 10195 / G37) (Mycoplasmoides genitalium).